The primary structure comprises 66 residues: Cytochrome b-c1 complex subunit 9, mitochondrial (66 aa).

At serine 2–phenylalanine 17 the chain is on the mitochondrial matrix side. Residues valine 18 to histidine 43 traverse the membrane as a helical segment. The Mitochondrial intermembrane segment spans residues asparagine 44–glutamate 66.

Belongs to the UQCR10/QCR9 family. As to quaternary structure, component of the ubiquinol-cytochrome c oxidoreductase (cytochrome b-c1 complex, complex III, CIII), a multisubunit enzyme composed of 10 subunits. The complex is composed of 3 respiratory subunits cytochrome b (COB), cytochrome c1 (CYT1) and Rieske protein (RIP1), 2 core protein subunits COR1 and QCR2, and 5 low-molecular weight protein subunits QCR6, QCR7, QCR8, QCR9 and QCR10. The complex exists as an obligatory dimer and forms supercomplexes (SCs) in the inner mitochondrial membrane with a monomer or a dimer of cytochrome c oxidase (complex IV, CIV), resulting in 2 different assemblies (supercomplexes III(2)IV and III(2)IV(2)). Interacts with the transmembrane segment of RIP1.

Its subcellular location is the mitochondrion inner membrane. Functionally, component of the ubiquinol-cytochrome c oxidoreductase, a multisubunit transmembrane complex that is part of the mitochondrial electron transport chain which drives oxidative phosphorylation. The respiratory chain contains 3 multisubunit complexes succinate dehydrogenase (complex II, CII), ubiquinol-cytochrome c oxidoreductase (cytochrome b-c1 complex, complex III, CIII) and cytochrome c oxidase (complex IV, CIV), that cooperate to transfer electrons derived from NADH and succinate to molecular oxygen, creating an electrochemical gradient over the inner membrane that drives transmembrane transport and the ATP synthase. The cytochrome b-c1 complex catalyzes electron transfer from ubiquinol to cytochrome c, linking this redox reaction to translocation of protons across the mitochondrial inner membrane, with protons being carried across the membrane as hydrogens on the quinol. In the process called Q cycle, 2 protons are consumed from the matrix, 4 protons are released into the intermembrane space and 2 electrons are passed to cytochrome c. This is Cytochrome b-c1 complex subunit 9, mitochondrial (QCR9) from Saccharomyces cerevisiae (strain ATCC 204508 / S288c) (Baker's yeast).